Here is a 385-residue protein sequence, read N- to C-terminus: Basigin (385 aa).

The first 21 residues, 1 to 21, serve as a signal peptide directing secretion; it reads MAAALFVLLGFALLGTHGASG. Residues 37–120 form the Ig-like domain; it reads GGSVELHCEA…SNDPDRNHLT (84 aa). Cystine bridges form between cysteine 44/cysteine 108, cysteine 157/cysteine 203, and cysteine 242/cysteine 301. The 82-residue stretch at 138-219 folds into the Ig-like C2-type domain; it reads EPGTVFTTVE…MGTANIQLHG (82 aa). The Extracellular segment spans residues 138 to 323; sequence EPGTVFTTVE…ITLRVRSHLA (186 aa). An N-linked (GlcNAc...) asparagine glycan is attached at asparagine 160. Residues 195–199 are essential for interaction with KDR/VEGFR2; that stretch reads DDQWG. Positions 221 to 315 constitute an Ig-like V-type domain; that stretch reads PRVKAVKSSE…SKGSDQAIIT (95 aa). 2 N-linked (GlcNAc...) asparagine glycosylation sites follow: asparagine 268 and asparagine 302. Residues 324-344 traverse the membrane as a helical segment; that stretch reads ALWPFLGIVAEVLVLVTIIFI. At 345–385 the chain is on the cytoplasmic side; the sequence is YEKRRKPEDVLDDDDAGSAPLKSSGQHQNDKGKNVRQRNSS. Residues 353–385 are disordered; it reads DVLDDDDAGSAPLKSSGQHQNDKGKNVRQRNSS. A phosphoserine mark is found at serine 362 and serine 368.

As to quaternary structure, homooligomer. Interacts with NXNL1. Interacts with SLC2A1 and SLC16A1/GLUT1. Interacts with XKR8; promoting its localization at the cell membrane. In terms of assembly, (Microbial infection) Interacts with P.falciparum (isolate 3D7) RH5/PfRH5; the interaction is required for the invasion of the host erythrocytes by the parasite at the merozoite stage. Homooligomer. Forms heterooligomers with isoform 3. Interacts with VEGFA and KDR/VEGFR2. Interacts with PPIA/CYPA. Interacts with PPIL2; regulates BSG transport to the cell membrane. Interacts with SLC16A1; interaction mediates SLC16A3 targeting to the plasma membrane. Interacts with SLC16A12. Interacts with SLC16A11. Interacts with AJAP1. Interacts with SLC1A3, ATP1B2, MAG and L1CAM. Interacts with SLC16A3; interaction mediates SLC16A3 targeting to the plasma membrane. As to quaternary structure, (Microbial infection) Interacts with P.falciparum (isolates 3D7 or 7G8) RH5/PfRH5; the interaction is required for the invasion of the host erythrocytes by the parasite at the merozoite stage. In terms of assembly, (Microbial infection) Does not interact with severe acute respiratory syndrome coronavirus 2 (SARS-CoV-2) spike glycoprotein, even if previous works were based on a putative interaction. Forms heterooligomers with isoform 2. As to quaternary structure, interacts with SLC16A6; this interaction mediates targeting to the plasma membrane. Post-translationally, N-glycosylated. Retina-specific. Expressed in retinal cone photoreceptors (at protein level). In terms of tissue distribution, expressed in erythrocytes (at protein level). Highly expressed in melanoma cell lines (at protein level). Highly expressed in the heart, kidney, skeletal muscle and testis. As to expression, highly expressed in the bone marrow, fetal liver, lung, testis and thymus.

The protein localises to the melanosome. Its subcellular location is the cell membrane. The protein resides in the photoreceptor inner segment. It localises to the cell projection. It is found in the cilium. The protein localises to the photoreceptor outer segment. Its subcellular location is the endosome. The protein resides in the endoplasmic reticulum membrane. It localises to the basolateral cell membrane. Its function is as follows. Essential for normal retinal maturation and development. Acts as a retinal cell surface receptor for NXNL1 and plays an important role in NXNL1-mediated survival of retinal cone photoreceptors. In association with glucose transporter SLC16A1/GLUT1 and NXNL1, promotes retinal cone survival by enhancing aerobic glycolysis and accelerating the entry of glucose into photoreceptors. May act as a potent stimulator of IL6 secretion in multiple cell lines that include monocytes. Functionally, (Microbial infection) Erythrocyte receptor for P.falciparum RH5 which is essential for erythrocyte invasion by the merozoite stage of P.falciparum isolates 3D7 and Dd2. Signaling receptor for cyclophilins, essential for PPIA/CYPA and PPIB/CYPB-dependent signaling related to chemotaxis and adhesion of immune cells. Plays an important role in targeting monocarboxylate transporters SLC16A1/GLUT1, SLC16A11 and SLC16A12 to the plasma membrane. Acts as a coreceptor for vascular endothelial growth factor receptor 2 (KDR/VEGFR2) in endothelial cells enhancing its VEGFA-mediated activation and downstream signaling. Promotes angiogenesis through EPAS1/HIF2A-mediated up-regulation of VEGFA (isoform VEGF-165 and VEGF-121) and KDR/VEGFR2 in endothelial cells. Plays a key role in regulating tumor growth, invasion, metastasis and neoangiogenesis by stimulating the production and release of extracellular matrix metalloproteinases and KDR/VEGFR2 by both tumor cells and stromal cells (fibroblasts and endothelial cells). In terms of biological role, (Microbial infection) Erythrocyte receptor for P.falciparum RH5 which is essential for erythrocyte invasion by the merozoite stage of P.falciparum isolates 3D7, Dd2, 7G8 and HB3. Binding of P.falciparum RH5 results in BSG dimerization which triggers an increase in intracellular Ca(2+) in the erythrocyte. This essential step leads to a rearrangement of the erythrocyte cytoskeleton required for the merozoite invasion. Its function is as follows. (Microbial infection) Can facilitate human SARS coronavirus (SARS-CoV-1) infection via its interaction with virus-associated PPIA/CYPA. Functionally, (Microbial infection) Can facilitate HIV-1 infection via its interaction with virus-associated PPIA/CYPA. (Microbial infection) First described as a receptor for severe acute respiratory syndrome coronavirus 2 (SARS-CoV-2), it is not required for SARS-CoV-2 infection. In terms of biological role, (Microbial infection) Acts as a receptor for measles virus. Its function is as follows. (Microbial infection) Promotes entry of pentamer-expressing human cytomegalovirus (HCMV) into epithelial and endothelial cells. The protein is Basigin of Homo sapiens (Human).